A 239-amino-acid chain; its full sequence is Ribonuclease PH (239 aa).

Residues Arg86 and 124-126 (GTR) contribute to the phosphate site.

This sequence belongs to the RNase PH family. As to quaternary structure, homohexameric ring arranged as a trimer of dimers.

The catalysed reaction is tRNA(n+1) + phosphate = tRNA(n) + a ribonucleoside 5'-diphosphate. Functionally, phosphorolytic 3'-5' exoribonuclease that plays an important role in tRNA 3'-end maturation. Removes nucleotide residues following the 3'-CCA terminus of tRNAs; can also add nucleotides to the ends of RNA molecules by using nucleoside diphosphates as substrates, but this may not be physiologically important. Probably plays a role in initiation of 16S rRNA degradation (leading to ribosome degradation) during starvation. The polypeptide is Ribonuclease PH (Rhizobium etli (strain CIAT 652)).